A 324-amino-acid polypeptide reads, in one-letter code: Germination protease (324 aa).

A propeptide spanning residues M1–D10 is cleaved from the precursor.

The protein belongs to the peptidase A25 family. In terms of assembly, homotetramer. Autoproteolytically processed. The inactive tetrameric zymogen termed p46 autoprocesses to a smaller form termed p41, which is active only during spore germination.

It carries out the reaction Endopeptidase action with P4 Glu or Asp, P1 preferably Glu &gt; Asp, P1' hydrophobic and P2' Ala.. Functionally, initiates the rapid degradation of small, acid-soluble proteins during spore germination. The chain is Germination protease from Caldanaerobacter subterraneus subsp. tengcongensis (strain DSM 15242 / JCM 11007 / NBRC 100824 / MB4) (Thermoanaerobacter tengcongensis).